A 142-amino-acid polypeptide reads, in one-letter code: Transcriptional regulator MraZ (142 aa).

2 consecutive SpoVT-AbrB domains span residues 5–47 (EYQH…TINE) and 76–119 (ACIV…SREK).

It belongs to the MraZ family. As to quaternary structure, forms oligomers.

Its subcellular location is the cytoplasm. It localises to the nucleoid. The protein is Transcriptional regulator MraZ of Clostridium botulinum (strain Eklund 17B / Type B).